The primary structure comprises 31 residues: Cyclotide psybry A (31 aa).

A cross-link (cyclopeptide (Gly-Asn)) is located at residues 1-31; it reads GFNPCGETCIWFPTCHAPGCTCSIANICVRN. Cystine bridges form between Cys5–Cys20, Cys9–Cys22, and Cys15–Cys28.

Post-translationally, this is a cyclic peptide.

Its function is as follows. Probably participates in a plant defense mechanism. This is Cyclotide psybry A from Psychotria brachyceras.